The chain runs to 154 residues: 17.4 kDa class I heat shock protein (154 aa).

The 115-residue stretch at 40-154 folds into the sHSP domain; sequence DAAAFAGARI…PDVKSIQITG (115 aa).

This sequence belongs to the small heat shock protein (HSP20) family. May form oligomeric structures.

It is found in the cytoplasm. The chain is 17.4 kDa class I heat shock protein (HSP17.4) from Oryza sativa subsp. japonica (Rice).